Here is a 131-residue protein sequence, read N- to C-terminus: Small ribosomal subunit protein uS12 (131 aa).

The interval Met-1 to Gly-32 is disordered. Asp-89 is modified (3-methylthioaspartic acid). Residues Arg-110–Lys-131 are disordered. A compositionally biased stretch (basic residues) spans Lys-111–Lys-131.

This sequence belongs to the universal ribosomal protein uS12 family. In terms of assembly, part of the 30S ribosomal subunit. Contacts proteins S8 and S17. May interact with IF1 in the 30S initiation complex.

With S4 and S5 plays an important role in translational accuracy. Its function is as follows. Interacts with and stabilizes bases of the 16S rRNA that are involved in tRNA selection in the A site and with the mRNA backbone. Located at the interface of the 30S and 50S subunits, it traverses the body of the 30S subunit contacting proteins on the other side and probably holding the rRNA structure together. The combined cluster of proteins S8, S12 and S17 appears to hold together the shoulder and platform of the 30S subunit. The sequence is that of Small ribosomal subunit protein uS12 from Acidobacterium capsulatum (strain ATCC 51196 / DSM 11244 / BCRC 80197 / JCM 7670 / NBRC 15755 / NCIMB 13165 / 161).